The following is a 261-amino-acid chain: Claudin-18 (261 aa).

Residues 1 to 6 are Cytoplasmic-facing; sequence MSTTRC. Residues 7-27 traverse the membrane as a helical segment; sequence QVVGFLLSILGLAGCIVATEM. At 28–80 the chain is on the extracellular side; sequence DMWSTQDLYDNPVTAVFQYEGLWRSCVQQSSGFTECRPYLTILGLPAMLQAVR. A helical membrane pass occupies residues 81-101; sequence ALMIVGIVLSVIGLLVAIFAL. The Cytoplasmic portion of the chain corresponds to 102–122; it reads KCIRMGNMDDSAKAKMTLTSG. Residues 123 to 143 traverse the membrane as a helical segment; that stretch reads IMFIIAGLCAIAGVSVFANML. At 144 to 174 the chain is on the extracellular side; that stretch reads VTNFWMSTASMFTSMGGMVQTVQTRYTFGAA. The helical transmembrane segment at 175–195 threads the bilayer; sequence LFVGWVAGGLTLIGGVLMCIA. The tract at residues 195-261 is required for role in regulation of RANKL-induced osteoclast differentiation; sequence ACRGLAPEET…QSPPSKYDYV (67 aa). Residues 196-261 lie on the Cytoplasmic side of the membrane; the sequence is CRGLAPEETN…QSPPSKYDYV (66 aa). A Phosphoserine modification is found at Ser-214. The interval 228–261 is disordered; it reads SSGFESNTRNKKIYDGGARTEDEGQSPPSKYDYV. Positions 239–249 are enriched in basic and acidic residues; the sequence is KIYDGGARTED.

The protein belongs to the claudin family. As to quaternary structure, interacts with TJP2/ZO-2. Interacts with TJP1/ZO-1. Interacts with YAP1 (phosphorylated); the interaction sequesters YAP1 away from the nucleus and thereby restricts transcription of YAP1 target genes. Interacts with CLDN19.

The protein resides in the cell junction. It localises to the tight junction. Its subcellular location is the cell membrane. Involved in alveolar fluid homeostasis via regulation of alveolar epithelial tight junction composition and therefore ion transport and solute permeability, potentially via downstream regulation of the actin cytoskeleton organization and beta-2-adrenergic signaling. Required for lung alveolarization and maintenance of the paracellular alveolar epithelial barrier. Acts to maintain epithelial progenitor cell proliferation and organ size, via regulation of YAP1 localization away from the nucleus and thereby restriction of YAP1 target gene transcription. Acts as a negative regulator of RANKL-induced osteoclast differentiation, potentially via relocation of TJP2/ZO-2 away from the nucleus, subsequently involved in bone resorption in response to calcium deficiency. Mediates the osteoprotective effects of estrogen, potentially via acting downstream of estrogen signaling independently of RANKL signaling pathways. This chain is Claudin-18 (CLDN18), found in Bos taurus (Bovine).